The following is a 444-amino-acid chain: MPGIKVFGETVLRGSVRVSGAKNATTKLLVASLLSDQRTILKNVPNIEDVRQTVDLCRVLGAIVEWDQQAQVIEIHTPRILLSKVPPQFSCVNRIPILLLGALLRRCPYGIFVPILGGDAIGPRTLHFHLEGLKKLGAEIVISDEGYWASAPNGLVGAHITLPYPSVGATENLILASVGAQGRTIIKNAALEVEIIDLIVFLQKAGVEITTDNDKTIEIFGCQDFYSVEHSIIPDKIEAASFGMAAVVSQGRIFVEQARHEHMIPFLKVLRSIGGGFSVHENGIEFFYDKPLKGGVLLETDVHPGFITDWQQPFAVLLSQSEGCSVIHETVHENRLGYLKGLVKMGAHCDLFHECLSAKSCRYSTGNHPHSAVIHGPTPLQATDLVIPDLRAGFAYVMAALIAEGGASWIENTEMLDRGYTDWRGKLERLGAKVLARDSVSVYV.

Residue 22–23 coordinates phosphoenolpyruvate; sequence KN. Arg94 serves as a coordination point for UDP-N-acetyl-alpha-D-glucosamine. Catalysis depends on Asp119, which acts as the Proton donor. Residues Asp309 and Val331 each coordinate UDP-N-acetyl-alpha-D-glucosamine.

This sequence belongs to the EPSP synthase family. MurA subfamily.

The protein resides in the cytoplasm. It carries out the reaction phosphoenolpyruvate + UDP-N-acetyl-alpha-D-glucosamine = UDP-N-acetyl-3-O-(1-carboxyvinyl)-alpha-D-glucosamine + phosphate. It participates in cell wall biogenesis; peptidoglycan biosynthesis. Cell wall formation. Adds enolpyruvyl to UDP-N-acetylglucosamine. The sequence is that of UDP-N-acetylglucosamine 1-carboxyvinyltransferase from Chlamydia trachomatis serovar D (strain ATCC VR-885 / DSM 19411 / UW-3/Cx).